A 701-amino-acid polypeptide reads, in one-letter code: METKKLITATDTQYSGILLNALNDQRIQGLYCDVTVIVEDRKFRAHRNILSACSTYFHQLFSVAGQVVELNFVKADIFAEILNYIYSSKIVRVRCDMLEELIKSGKLLGVPFIAELGIPLSQVKSISGAGGKDGGTDAPSNPDHKAPEPQKSSDSPLPCTVKIKADVKTEMPVITESFSLSSDDYKDKKASGSQDHNSEKEDDDDDVIFCSEIVSSKQAPAERKEAAQTQIPPDNEQVPEVKKVTPSSQVQLTQNSLPTNQQSSKNTSSTTQKFTPPVNANISKNPTPAANGFLSPTAQKQGTPNAVQNQHSQNITSGNALPQQKPVVNFSSIKPQQISAIKPKTEVIIHGNGLSPPSSSVIPLGQQPVTPKHISFDGVQKKQVVTFTQGSPSKPGEFKIKIADVVSGSSLDSFKDSEPRRIIDGKKIITLDTASEIEGLSTGCKVYANIGEDTYDIVIPIKEDPEEGEAKLDLDGLPNRKRMKLKHDDHYELIVDGRVYYICIVCKRSYVCLTSLRRHFNVHSWEKKYPCRYCERVFPLAEYRTKHEIHHTGERRYQCLTCGSSFINYQVMASHIRSVHSLDPSGDSKLYRLNPCKTLQIRQYAYVNNSTNGTVINDGAINVPVITDGGINVPVINDGGIVYDIDPDEPQQPASEGNHANSATKPVNWDNIFIQQSNQNMFKLNTSEGGTEFEFVIPESY.

Residues C32–R94 form the BTB domain. Disordered stretches follow at residues G128–P158 and S181–H311. Residues T245–P258 show a composition bias toward polar residues. Residues T259–K273 are compositionally biased toward low complexity. A compositionally biased stretch (polar residues) spans V278–H311. Residues A470–N609 are required for methylation dependent DNA-binding. C2H2-type zinc fingers lie at residues Y501–H523, Y529–H551, and Y557–H580. A required for sequence specific DNA-binding region spans residues H519 to Y701. Positions D644–T664 are disordered. Positions Q652–T664 are enriched in polar residues.

As to quaternary structure, self associates. Interacts with tcf7l1-A, leading to repression of tcf7l1-A target genes. Interacts with ctnnd1, and this interaction may inhibit DNA-binding. Interacts with ncor1.

Its subcellular location is the nucleus. Its function is as follows. Transcriptional regulator with bimodal DNA-binding specificity. Binds to methylated CpG dinucleotides in the consensus sequence 5'-CGCG-3' and also binds to the non-methylated consensus sequence 5'-CTGCNA-3'. May recruit the N-CoR repressor complex to promote histone deacetylation and the formation of repressive chromatin structures in target gene promoters. Contributes to the repression of target genes of the Wnt signaling pathway and to the methylation-dependent repression of zygotic transcription prior to the mid-blastula transition (MBT). Also required for gastrulation movements. The sequence is that of Transcriptional regulator Kaiso (zbtb33) from Xenopus laevis (African clawed frog).